A 128-amino-acid polypeptide reads, in one-letter code: T-cell leukemia/lymphoma protein 1B (128 aa).

It belongs to the TCL1 family. In terms of assembly, interacts with AKT1 and AKT2 (via PH domain). Does not interact with AKT3. Expressed in a variety of tissues including placenta and testis.

In terms of biological role, enhances the phosphorylation and activation of AKT1 and AKT2. The polypeptide is T-cell leukemia/lymphoma protein 1B (TCL1B) (Homo sapiens (Human)).